A 335-amino-acid polypeptide reads, in one-letter code: UPF0353 protein NFA_34780 (335 aa).

The next 2 helical transmembrane spans lie at 8-28 (ALIWLGFLAVVALIALGYVLV) and 61-81 (IALMLVGLVFLTIAAAGPTSV). The VWFA domain occupies 90–295 (TVVLVMDVSL…EELTAVYDTL (206 aa)). The chain crosses the membrane as a helical span at residues 310-330 (RPWLLLGMLVVAAGIVTGLLY).

The protein belongs to the UPF0353 family.

Its subcellular location is the cell membrane. The chain is UPF0353 protein NFA_34780 from Nocardia farcinica (strain IFM 10152).